Consider the following 410-residue polypeptide: MAQLNDNYLKLKAGYLFPEIGRRVKAFSQANPEAKIIRLGIGDVTQPLAPAVLKAFHDGVDDLANKDKFMGYGPEQGYEFLIDTLIEKAYKPLGVELKTSEIFISDGSKCDCANILDIFALDNKVAICDPVYPVYNDTNVMVGRTGEADDKGYYEGLTYLACTEENGFTPAIPKEKVDIIYLCYPNNPTGTVATKEVLKAWVDYALANDAVIFFDAAYEAFITEPGIPHSIYEIEGANRCAIEFRSFSKTAGFTGVRCALTVVPEELLAATGNGEKVSLNKLWNRRQSTKFNGVSYPVQKAAAAVYSDEGWAQIKETIDYYMENARLIREGLQEAGLTVYGGVNAPYIWLKTPNGMSSWDFFDKLLSECHVVGTPGSGFGPSGEGFYRLSAFGDRENVLTAIDRIKKNLA.

Substrate is bound by residues tyrosine 15 and glycine 42. Pyridoxal 5'-phosphate-binding positions include tyrosine 72, 108–109, tyrosine 132, asparagine 187, tyrosine 218, and 246–248; these read SK and SFS. Positions 109, 132, and 187 each coordinate substrate. Lysine 249 is subject to N6-(pyridoxal phosphate)lysine. Pyridoxal 5'-phosphate-binding residues include arginine 257 and asparagine 292. 2 residues coordinate substrate: asparagine 292 and arginine 388.

This sequence belongs to the class-I pyridoxal-phosphate-dependent aminotransferase family. LL-diaminopimelate aminotransferase subfamily. As to quaternary structure, homodimer. Pyridoxal 5'-phosphate serves as cofactor.

It carries out the reaction (2S,6S)-2,6-diaminopimelate + 2-oxoglutarate = (S)-2,3,4,5-tetrahydrodipicolinate + L-glutamate + H2O + H(+). It participates in amino-acid biosynthesis; L-lysine biosynthesis via DAP pathway; LL-2,6-diaminopimelate from (S)-tetrahydrodipicolinate (aminotransferase route): step 1/1. Involved in the synthesis of meso-diaminopimelate (m-DAP or DL-DAP), required for both lysine and peptidoglycan biosynthesis. Catalyzes the direct conversion of tetrahydrodipicolinate to LL-diaminopimelate. The protein is LL-diaminopimelate aminotransferase of Syntrophotalea carbinolica (strain DSM 2380 / NBRC 103641 / GraBd1) (Pelobacter carbinolicus).